The following is a 330-amino-acid chain: DNA-directed RNA polymerase subunit alpha (330 aa).

Residues 1-231 (MQTNLLKPKT…EQLAVFAQLE (231 aa)) form an alpha N-terminal domain (alpha-NTD) region. Residues 250 to 330 (FDPILLRPVD…NWPPAGLDKR (81 aa)) are alpha C-terminal domain (alpha-CTD).

It belongs to the RNA polymerase alpha chain family. In terms of assembly, homodimer. The RNAP catalytic core consists of 2 alpha, 1 beta, 1 beta' and 1 omega subunit. When a sigma factor is associated with the core the holoenzyme is formed, which can initiate transcription.

The enzyme catalyses RNA(n) + a ribonucleoside 5'-triphosphate = RNA(n+1) + diphosphate. DNA-dependent RNA polymerase catalyzes the transcription of DNA into RNA using the four ribonucleoside triphosphates as substrates. The polypeptide is DNA-directed RNA polymerase subunit alpha (Paracidovorax citrulli (strain AAC00-1) (Acidovorax citrulli)).